The following is a 275-amino-acid chain: Bifunctional protein FolD (275 aa).

NADP(+) contacts are provided by residues 161 to 163 (GRS), Ser-186, and Thr-227.

The protein belongs to the tetrahydrofolate dehydrogenase/cyclohydrolase family. As to quaternary structure, homodimer.

The enzyme catalyses (6R)-5,10-methylene-5,6,7,8-tetrahydrofolate + NADP(+) = (6R)-5,10-methenyltetrahydrofolate + NADPH. The catalysed reaction is (6R)-5,10-methenyltetrahydrofolate + H2O = (6R)-10-formyltetrahydrofolate + H(+). The protein operates within one-carbon metabolism; tetrahydrofolate interconversion. Catalyzes the oxidation of 5,10-methylenetetrahydrofolate to 5,10-methenyltetrahydrofolate and then the hydrolysis of 5,10-methenyltetrahydrofolate to 10-formyltetrahydrofolate. This Parafrankia sp. (strain EAN1pec) protein is Bifunctional protein FolD.